Here is a 673-residue protein sequence, read N- to C-terminus: DNA topoisomerase 1 (673 aa).

A Toprim domain is found at 1-134; that stretch reads MVAEKPKAAA…ARRMKFSTLA (134 aa). The Mg(2+) site is built by Glu4 and Asp103. The region spanning 149–568 is the Topo IA-type catalytic domain; it reads DVEMIEAGMA…MSKKTISKLL (420 aa). Residues 189 to 194 form an interaction with DNA region; that stretch reads SAGRVQ. Catalysis depends on Tyr311, which acts as the O-(5'-phospho-DNA)-tyrosine intermediate. The disordered stretch occupies residues 352–374; the sequence is LRPVQGSKDDPAHPAIHPTGEKP. The C4-type zinc-finger motif lies at 595 to 615; the sequence is CHLCGRKAVSAVSGYRLCSHH.

The protein belongs to the type IA topoisomerase family. In terms of assembly, monomer. Mg(2+) serves as cofactor.

It carries out the reaction ATP-independent breakage of single-stranded DNA, followed by passage and rejoining.. Functionally, releases the supercoiling and torsional tension of DNA, which is introduced during the DNA replication and transcription, by transiently cleaving and rejoining one strand of the DNA duplex. Introduces a single-strand break via transesterification at a target site in duplex DNA. The scissile phosphodiester is attacked by the catalytic tyrosine of the enzyme, resulting in the formation of a DNA-(5'-phosphotyrosyl)-enzyme intermediate and the expulsion of a 3'-OH DNA strand. The free DNA strand then undergoes passage around the unbroken strand, thus removing DNA supercoils. Finally, in the religation step, the DNA 3'-OH attacks the covalent intermediate to expel the active-site tyrosine and restore the DNA phosphodiester backbone. In Aeropyrum pernix (strain ATCC 700893 / DSM 11879 / JCM 9820 / NBRC 100138 / K1), this protein is DNA topoisomerase 1.